A 311-amino-acid polypeptide reads, in one-letter code: MSKVSVFGGGAWGRALAFALAEKNEVRIISRRDISSLLEPLNQKLKTLNCTSIIQVSHKEALDAQYFVMAIATSALREWLAVADLPQKIKILCASKGIESGSGAFVSDIMEERIAHKSIAYLCGPSFASEVVHSLPCALVIHSRNLELSREFGTLMPHFIKTYASPDVVGGEVAGAYKNVIAIAGGICDGLAFGMNAKASLLARGLVEMSRFGEHFGAKMETFLGLSGAGDLFLTSNSTMSRNYRVGLGLAKGKAINEILKELGEVAEGVITAKAITEIGQRENIYTPIAREINLIINGKNVRESSKALMA.

NADPH-binding residues include Trp12, Arg31, Arg32, and Lys96. Positions 96, 124, and 126 each coordinate sn-glycerol 3-phosphate. Ala128 contributes to the NADPH binding site. Positions 178, 231, 241, 242, and 243 each coordinate sn-glycerol 3-phosphate. The Proton acceptor role is filled by Lys178. Arg242 contacts NADPH. Positions 266 and 268 each coordinate NADPH.

It belongs to the NAD-dependent glycerol-3-phosphate dehydrogenase family.

The protein localises to the cytoplasm. It catalyses the reaction sn-glycerol 3-phosphate + NAD(+) = dihydroxyacetone phosphate + NADH + H(+). The catalysed reaction is sn-glycerol 3-phosphate + NADP(+) = dihydroxyacetone phosphate + NADPH + H(+). It participates in membrane lipid metabolism; glycerophospholipid metabolism. Its function is as follows. Catalyzes the reduction of the glycolytic intermediate dihydroxyacetone phosphate (DHAP) to sn-glycerol 3-phosphate (G3P), the key precursor for phospholipid synthesis. The sequence is that of Glycerol-3-phosphate dehydrogenase [NAD(P)+] from Helicobacter hepaticus (strain ATCC 51449 / 3B1).